We begin with the raw amino-acid sequence, 803 residues long: MDAEMAAPALAAAHLLDSPMRPQVSRYYSKKRGSSHSRNGKDDANHDESKNQSPGLPLSRQSLSSSATHTYHTGGFYEIDHEKLPPKSPIHLKSIRVVKVSGYTSLDVTVSFPSLLALRSFFSSSPRSCTGPELDERFVMSSNHAARILRRRVAEEELAGDVMHQDSFWLVKPCLYDFSASSPHDVLTPSPPPATAQAKAPAASSCLLDTLKCDGAGWGVRRRVRYIGRHHDASKEASAASLDGYNTEVSVQEEQQQRLRLRLRLRQRREQEDNKSTSNGKRKREEAESSMDKSRAARKKKAKTYKSPKKVEKRRVVEAKDGDPRRGKDRWSAERYAAAERSLLDIMRSHGACFGAPVMRQALREEARKHIGDTGLLDHLLKHMAGRVPEGSADRFRRRHNADGAMEYWLEPAELAEVRRLAGVSDPYWVPPPGWKPGDDVSAVAGDLLVKKKVEELAEEVDGVKRHIEQLSSNLVQLEKETKSEAERSYSSRKEKYQKLMKANEKLEKQVLSMKDMYEHLVQKKGKLKKEVLSLKDKYKLVLEKNDKLEEQMASLSSSFLSLKEQLLLPRNGDNLNMERERVEVTLGKQEGLVPGEPLYVDGGDRISQQADATVVQVGEKRTARKSSFRICKPQGTFMWPHMASGTSMAISGGGSSSCPVASGPEQLPRSSSCPSIGPGGLPPSSRAPAEVVVASPLDEHVAFRGGFNTPPSASSTNAAAAAKLPPLPSPTSPLQTRALFAAGFTVPALHNFSGLTLRHVDSSSPSSAPCGAREKMVTLFDGDCRGISVVGTELALATPSYC.

Disordered stretches follow at residues 21 to 64 and 264 to 333; these read RPQV…QSLS and RLRQ…RWSA. Positions 39–50 are enriched in basic and acidic residues; that stretch reads NGKDDANHDESK. The segment covering 51-64 has biased composition (polar residues); that stretch reads NQSPGLPLSRQSLS. Basic and acidic residues predominate over residues 283–295; the sequence is KREEAESSMDKSR. The segment covering 296–313 has biased composition (basic residues); sequence AARKKKAKTYKSPKKVEK. Residues 314-333 are compositionally biased toward basic and acidic residues; sequence RRVVEAKDGDPRRGKDRWSA. A coiled-coil region spans residues 450 to 567; it reads VKKKVEELAE…SSFLSLKEQL (118 aa). A disordered region spans residues 651–688; that stretch reads ISGGGSSSCPVASGPEQLPRSSSCPSIGPGGLPPSSRA.

The protein localises to the nucleus. It is found in the chromosome. In terms of biological role, plays a fundamental role in building the proper chromosome structure at the beginning of meiosis in male meiocytes. Required for the transition from leptotene to zygotene in meiocytes. Required for homologous chromosome pairing. The sequence is that of Protein AMEIOTIC 1 homolog from Oryza sativa subsp. japonica (Rice).